The sequence spans 176 residues: Translation initiation factor IF-3 (176 aa).

The protein belongs to the IF-3 family. In terms of assembly, monomer.

It localises to the cytoplasm. Functionally, IF-3 binds to the 30S ribosomal subunit and shifts the equilibrium between 70S ribosomes and their 50S and 30S subunits in favor of the free subunits, thus enhancing the availability of 30S subunits on which protein synthesis initiation begins. This Streptococcus uberis (strain ATCC BAA-854 / 0140J) protein is Translation initiation factor IF-3.